Consider the following 317-residue polypeptide: Petrobactin-binding protein YclQ (317 aa).

The N-terminal stretch at 1-19 (MKKFALLFIALVTAVVISA) is a signal peptide. C20 carries the N-palmitoyl cysteine lipid modification. C20 carries S-diacylglycerol cysteine lipidation. A Fe/B12 periplasmic-binding domain is found at 56–317 (KVVVFDFGSL…IKEVKDGLEK (262 aa)).

It belongs to the bacterial solute-binding protein 8 family. The complex is composed of two ATP-binding proteins (YclP), two transmembrane proteins (YclN and YclO) and a solute-binding protein (YclQ). Interacts with FloT.

It is found in the cell membrane. It localises to the membrane raft. Functionally, part of the ABC transporter complex YclNOPQ involved in uptake of ferric-petrobactin. Petrobactin is a photoreactive 3,4-catecholate siderophore produced by many members of the B.cereus group, including B.anthracis. Binds selectively iron-free and ferric petrobactin and the petrobactin precursor 3,4-dihydroxybenzoic acid (3,4-DHB). The chain is Petrobactin-binding protein YclQ (yclQ) from Bacillus subtilis (strain 168).